A 122-amino-acid polypeptide reads, in one-letter code: UPF0102 protein NGR_c36770 (122 aa).

Belongs to the UPF0102 family.

In Sinorhizobium fredii (strain NBRC 101917 / NGR234), this protein is UPF0102 protein NGR_c36770.